The sequence spans 293 residues: Elongation factor Ts (293 aa).

The involved in Mg(2+) ion dislocation from EF-Tu stretch occupies residues 80–83 (TDFV).

This sequence belongs to the EF-Ts family.

The protein resides in the cytoplasm. In terms of biological role, associates with the EF-Tu.GDP complex and induces the exchange of GDP to GTP. It remains bound to the aminoacyl-tRNA.EF-Tu.GTP complex up to the GTP hydrolysis stage on the ribosome. This Herminiimonas arsenicoxydans protein is Elongation factor Ts.